The primary structure comprises 630 residues: Beta-phellandrene synthase, chloroplastic (630 aa).

The N-terminal 48 residues, 1-48 (MALVSSAPKSCLHKSLIRSTHHELKPLRRTIPTLGMCRRGKSFTPSVS), are a transit peptide targeting the chloroplast. Mg(2+) contacts are provided by Asp381, Asp385, and Asp533. Positions 381–385 (DDIYD) match the DDXXD motif motif.

Belongs to the terpene synthase family. Tpsd subfamily. Mg(2+) is required as a cofactor. The cofactor is Mn(2+). It depends on K(+) as a cofactor.

The protein localises to the plastid. It is found in the chloroplast. It catalyses the reaction (2E)-geranyl diphosphate = (-)-beta-phellandrene + diphosphate. Its pathway is terpene metabolism; oleoresin biosynthesis. Converts geranyl diphosphate to four products with (-)-(4S)-beta-phellandrene (52%) as the major olefin, and lesser amounts of (-)-(1S,5S)-beta-pinene (34%), (-)-1S,5S-alpha-pinene (8.5%), and (-)-(4S)-limonene (6%). Involved in defensive oleoresin formation in conifers in response to insect attack or other injury. Involved in monoterpene (C10) olefins biosynthesis. The sequence is that of Beta-phellandrene synthase, chloroplastic (ag8) from Abies grandis (Grand fir).